The sequence spans 738 residues: Sporulation kinase E (738 aa).

PAS domains are found at residues 29–99 (ELNQ…FKKG), 150–220 (NEQL…NRKG), 271–342 (SEER…YGEI), and 391–462 (SELK…FDEM). Residues 523 to 729 (GIAHEIRNPM…VFHITLPVRQ (207 aa)) enclose the Histidine kinase domain. His-526 carries the phosphohistidine; by autocatalysis modification.

It catalyses the reaction ATP + protein L-histidine = ADP + protein N-phospho-L-histidine.. In terms of biological role, phosphorylates the sporulation-regulatory protein spo0A under biofilm growth conditions. Also able to weakly phosphorylate spo0F. This is Sporulation kinase E (kinE) from Bacillus subtilis (strain 168).